Here is a 1628-residue protein sequence, read N- to C-terminus: Lysine-specific histone demethylase 1 homolog 3 (1628 aa).

The tract at residues 1–71 (MDGKEKKSGS…KKLSALGKDS (71 aa)) is disordered. Positions 19 to 28 (FDDDADDDEP) are enriched in acidic residues. Residues 43–64 (KDKVETESTGKQRQKQVVEKKL) are compositionally biased toward basic and acidic residues. An SWIRM domain is found at 378 to 478 (GRAAAVTAGL…AGISSVNGKA (101 aa)). Glu-647, Arg-649, Arg-655, and Glu-1077 together coordinate FAD. A disordered region spans residues 1271 to 1317 (SGKKSLRQANTTNTSRIRRKLNSPDTDSKGKLSNGNDVKTDEEFEDN).

Belongs to the flavin monoamine oxidase family. The cofactor is FAD.

Its function is as follows. Probable histone demethylase that reduces the levels of histone H3 'Lys-4' methylation in chromatin. The protein is Lysine-specific histone demethylase 1 homolog 3 (LDL3) of Arabidopsis thaliana (Mouse-ear cress).